Consider the following 150-residue polypeptide: Large ribosomal subunit protein bL9 (150 aa).

Belongs to the bacterial ribosomal protein bL9 family.

Binds to the 23S rRNA. This is Large ribosomal subunit protein bL9 from Moorella thermoacetica (strain ATCC 39073 / JCM 9320).